The chain runs to 468 residues: MKNRVTNIHFVGIGGVGMSGIAEVLHNLGFKVSGSDQARNAATEHLGSLGIQVYPGHTAEHVNGADVVVTSTAVKKENPEVVAALEQQIPVIPRALMLAELMRFRDGIAIAGTHGKTTTTSLTASILGAAGLDPTFVIGGKLNAAGTNARLGKGEYIVAEADESDASFLHLTPIMSVVTNIDEDHMDTYGHSVEKLHQAFIDFIHRMPFYGKAFLCIDSEHVRAILPKVSKPYATYGLDDTADIYATDIENVGAQMKFTVHVQMKGHEQGSFEVVLNMPGRHNVLNALAAIGVALEVGASVEAIQKGLLGFEGVGRRFQKYGDIKLPNGGTALLVDDYGHHPVEMAATLAAARGAYPEKRLVLAFQPHRYTRTRDLFEDFTKVLNTVDALVLTEVYAAGEEPIAAADSRALARAIRVLGKLEPIYCENVADLPEMLLNVLQDGDIVLNMGAGSINRVPAALLELSKQI.

Residue 112–118 coordinates ATP; the sequence is GTHGKTT.

The protein belongs to the MurCDEF family.

It localises to the cytoplasm. The enzyme catalyses UDP-N-acetyl-alpha-D-muramate + L-alanine + ATP = UDP-N-acetyl-alpha-D-muramoyl-L-alanine + ADP + phosphate + H(+). It functions in the pathway cell wall biogenesis; peptidoglycan biosynthesis. In terms of biological role, cell wall formation. This chain is UDP-N-acetylmuramate--L-alanine ligase, found in Neisseria meningitidis serogroup C (strain 053442).